A 39-amino-acid polypeptide reads, in one-letter code: Photosystem II reaction center protein J (39 aa).

Residues 9–29 (LWMVATVGGLAAGGLLILFVF) traverse the membrane as a helical segment.

Belongs to the PsbJ family. In terms of assembly, PSII is composed of 1 copy each of membrane proteins PsbA, PsbB, PsbC, PsbD, PsbE, PsbF, PsbH, PsbI, PsbJ, PsbK, PsbL, PsbM, PsbT, PsbX, PsbY, PsbZ, Psb30/Ycf12, at least 3 peripheral proteins of the oxygen-evolving complex and a large number of cofactors. It forms dimeric complexes.

The protein resides in the plastid. Its subcellular location is the chloroplast thylakoid membrane. Its function is as follows. One of the components of the core complex of photosystem II (PSII). PSII is a light-driven water:plastoquinone oxidoreductase that uses light energy to abstract electrons from H(2)O, generating O(2) and a proton gradient subsequently used for ATP formation. It consists of a core antenna complex that captures photons, and an electron transfer chain that converts photonic excitation into a charge separation. The polypeptide is Photosystem II reaction center protein J (Emiliania huxleyi (Coccolithophore)).